The following is an 88-amino-acid chain: Small ribosomal subunit protein uS15c (88 aa).

Belongs to the universal ribosomal protein uS15 family. In terms of assembly, part of the 30S ribosomal subunit.

The protein resides in the plastid. It is found in the chloroplast. The protein is Small ribosomal subunit protein uS15c (rps15) of Marchantia polymorpha (Common liverwort).